The chain runs to 309 residues: Homoserine kinase (309 aa).

91-101 (PIGSGLGSSAC) is an ATP binding site.

It belongs to the GHMP kinase family. Homoserine kinase subfamily.

It is found in the cytoplasm. The catalysed reaction is L-homoserine + ATP = O-phospho-L-homoserine + ADP + H(+). The protein operates within amino-acid biosynthesis; L-threonine biosynthesis; L-threonine from L-aspartate: step 4/5. Catalyzes the ATP-dependent phosphorylation of L-homoserine to L-homoserine phosphate. The sequence is that of Homoserine kinase (thrB) from Serratia marcescens.